Reading from the N-terminus, the 405-residue chain is uncharacterized protein (405 aa).

The N-terminal stretch at 1-34 (MNKFLKYFLILLALVLIVVPIVFATLLFKTSQDA) is a signal peptide. Basic and acidic residues predominate over residues 348-359 (EQNDTTDKDKTS). A disordered region spans residues 348–405 (EQNDTTDKDKTSNENSDSTNNSDSSNQQQPATDQNSNQNQGGTQQAPQASNNQNGVVN). 2 stretches are compositionally biased toward low complexity: residues 360 to 373 (NENS…DSSN) and 381 to 392 (QNSNQNQGGTQQ). Polar residues predominate over residues 393–405 (APQASNNQNGVVN).

It belongs to the LytR/CpsA/Psr (LCP) family.

This is an uncharacterized protein from Staphylococcus aureus (strain NCTC 8325 / PS 47).